The following is a 93-amino-acid chain: Pyrimidine/purine nucleoside phosphorylase (93 aa).

It belongs to the nucleoside phosphorylase PpnP family.

It catalyses the reaction a purine D-ribonucleoside + phosphate = a purine nucleobase + alpha-D-ribose 1-phosphate. The catalysed reaction is adenosine + phosphate = alpha-D-ribose 1-phosphate + adenine. It carries out the reaction cytidine + phosphate = cytosine + alpha-D-ribose 1-phosphate. The enzyme catalyses guanosine + phosphate = alpha-D-ribose 1-phosphate + guanine. It catalyses the reaction inosine + phosphate = alpha-D-ribose 1-phosphate + hypoxanthine. The catalysed reaction is thymidine + phosphate = 2-deoxy-alpha-D-ribose 1-phosphate + thymine. It carries out the reaction uridine + phosphate = alpha-D-ribose 1-phosphate + uracil. The enzyme catalyses xanthosine + phosphate = alpha-D-ribose 1-phosphate + xanthine. In terms of biological role, catalyzes the phosphorolysis of diverse nucleosides, yielding D-ribose 1-phosphate and the respective free bases. Can use uridine, adenosine, guanosine, cytidine, thymidine, inosine and xanthosine as substrates. Also catalyzes the reverse reactions. The polypeptide is Pyrimidine/purine nucleoside phosphorylase (Shewanella pealeana (strain ATCC 700345 / ANG-SQ1)).